The sequence spans 381 residues: Heterogeneous nuclear rnp K-like protein 2 (381 aa).

The disordered stretch occupies residues 1–34; the sequence is MSQFFEAATPVAIPTNNTNGGSSDAGSAATGGAP. Residues 15 to 33 show a composition bias toward low complexity; it reads TNNTNGGSSDAGSAATGGA. KH domains follow at residues 43 to 107, 156 to 221, and 258 to 326; these read TINH…IGDI, IGYV…LIEI, and NTRI…ESML. The segment at 357-381 is disordered; it reads RSDSASFLEEKEEPQKNHDNKEEQS. Serine 358, serine 360, and serine 362 each carry phosphoserine. Residues 369-381 show a composition bias toward basic and acidic residues; that stretch reads EPQKNHDNKEEQS.

Belongs to the HEK2 family. Binds RNA. Post-translationally, phosphorylated by the plasma membrane-Anchored casein kinase YCK1. Phosphorylation at its C-terminus reduces its RNA-binding capacity.

Its subcellular location is the cytoplasm. It localises to the P-body. It is found in the nucleus. The protein resides in the chromosome. The protein localises to the telomere. Its function is as follows. RNA-binding protein involved in the correct localization of transcripts in the cell. RNA localization is a widespread mechanism for achieving localized protein synthesis. Required for the asymmetric localization to the daughter cell nucleus of the ASH1 transcript, coding for a specific repressor of transcription. Overexpression inhibits translation of the ASH1 transcript. Involved in the stability of transcripts, like the MTL1 mRNA. Involved in structural and functional organization of telomeric chromatin and regulates silencing at the HMR locus. The sequence is that of Heterogeneous nuclear rnp K-like protein 2 (HEK2) from Saccharomyces cerevisiae (strain RM11-1a) (Baker's yeast).